Consider the following 953-residue polypeptide: Serine-aspartate repeat-containing protein C (953 aa).

An N-terminal signal peptide occupies residues 1-50 (MNNKKTATNRKGMIPNRLNKFSIRKYSVGTASILVGTTLIFGLSGHEAKA). Positions 51–160 (AEHTNGELNQ…AKNVSTTPKT (110 aa)) are disordered. The ligand binding A region stretch occupies residues 51 to 495 (AEHTNGELNQ…GSSTANGDQK (445 aa)). Over residues 56–71 (GELNQSKNETTAPSEN) the composition is skewed to polar residues. Basic and acidic residues predominate over residues 72–83 (KTTEKVDSRQLK). Residues 84-114 (DNTQTATADQPKVTMSDSATVKETSSNMQSP) are compositionally biased toward polar residues. The span at 115–132 (QNATASQSTTQTSNVTTN) shows a compositional bias: low complexity. The segment covering 133–160 (DKSSTTYSNETDKSNLTQAKNVSTTPKT) has biased composition (polar residues). CNA-B domains are found at residues 496–606 (KYNL…YKTP) and 607–717 (KYSL…EEET). The interval 678–933 (TQTGTNTTED…NNSNNGTLFG (256 aa)) is disordered. 2 stretches are compositionally biased toward acidic residues: residues 685 to 695 (TEDDKDADGGE) and 712 to 892 (YYEE…DSDS). The LPXTG sorting signal signature appears at 916 to 920 (LPETG). Positions 918–933 (ETGSENNNSNNGTLFG) are enriched in low complexity. Threonine 919 carries the pentaglycyl murein peptidoglycan amidated threonine modification. A propeptide spans 920–953 (GSENNNSNNGTLFGGLFAALGSLLLFGRRKKQNK) (removed by sortase).

The protein belongs to the serine-aspartate repeat-containing protein (SDr) family. In terms of assembly, homodimerizes; via N2-Domain. Interacts with host NRXN1; this interaction mediates bacterial attachment to host cells.

The protein resides in the secreted. The protein localises to the cell wall. Its function is as follows. Cell surface-associated calcium-binding protein which plays an important role in adhesion and pathogenesis. Mediates interactions with components of the extracellular matrix such as host NRXN1 to promote bacterial adhesion. The sequence is that of Serine-aspartate repeat-containing protein C (sdrC) from Staphylococcus aureus (strain Mu50 / ATCC 700699).